A 140-amino-acid polypeptide reads, in one-letter code: Large ribosomal subunit protein uL16 (140 aa).

Belongs to the universal ribosomal protein uL16 family. As to quaternary structure, part of the 50S ribosomal subunit.

Functionally, binds 23S rRNA and is also seen to make contacts with the A and possibly P site tRNAs. The protein is Large ribosomal subunit protein uL16 of Phytoplasma australiense.